We begin with the raw amino-acid sequence, 41 residues long: Large ribosomal subunit protein bL36 (41 aa).

It belongs to the bacterial ribosomal protein bL36 family.

This chain is Large ribosomal subunit protein bL36, found in Sinorhizobium medicae (strain WSM419) (Ensifer medicae).